A 760-amino-acid chain; its full sequence is Xaa-Pro dipeptidyl-peptidase (760 aa).

Active-site charge relay system residues include S349, D469, and H499.

This sequence belongs to the peptidase S15 family. In terms of assembly, homodimer.

The protein localises to the cytoplasm. The catalysed reaction is Hydrolyzes Xaa-Pro-|- bonds to release unblocked, N-terminal dipeptides from substrates including Ala-Pro-|-p-nitroanilide and (sequentially) Tyr-Pro-|-Phe-Pro-|-Gly-Pro-|-Ile.. Its function is as follows. Removes N-terminal dipeptides sequentially from polypeptides having unsubstituted N-termini provided that the penultimate residue is proline. In Streptococcus pyogenes serotype M5 (strain Manfredo), this protein is Xaa-Pro dipeptidyl-peptidase.